The following is a 439-amino-acid chain: Glutamine synthetase (439 aa).

A GS beta-grasp domain is found at Glu13–Gly98. The GS catalytic domain maps to Pro105–Leu439. Mg(2+) is bound by residues Glu128 and Glu130. Glu180 is a binding site for ATP. Mg(2+) contacts are provided by Glu185 and Glu192. Residues Asn236 to Gly237 and Gly237 each bind L-glutamate. Residue His241 coordinates Mg(2+). ATP-binding positions include His243–Ser245 and Ser245. L-glutamate is bound by residues Arg294, Glu300, and Arg312. ATP-binding residues include Arg312, Arg317, and Lys324. Residue Glu329 participates in Mg(2+) binding. Residue Arg331 coordinates L-glutamate.

Belongs to the glutamine synthetase family. Oligomer of 12 subunits arranged in the form of two hexagons. In its feedback-inhibited form, interacts with TnrA in order to block its DNA-binding activity. Mg(2+) is required as a cofactor.

It localises to the cytoplasm. It carries out the reaction L-glutamate + NH4(+) + ATP = L-glutamine + ADP + phosphate + H(+). Its activity is regulated as follows. Inhibited by glutamine. Glutamine synthetase (GS) is an unusual multitasking protein that functions as an enzyme, a transcription coregulator, and a chaperone in ammonium assimilation and in the regulation of genes involved in nitrogen metabolism. It catalyzes the ATP-dependent biosynthesis of glutamine from glutamate and ammonia. Feedback-inhibited GlnA also interacts with and regulates the activity of the transcriptional regulator TnrA. During nitrogen limitation, TnrA is in its DNA-binding active state and turns on the transcription of genes required for nitrogen assimilation. Under conditions of nitrogen excess, feedback-inhibited GlnA forms a stable complex with TnrA, which inhibits its DNA-binding activity. In contrast, feedback-inhibited GlnA acts as a chaperone to stabilize the DNA-binding activity of GlnR, which represses the transcription of nitrogen assimilation genes. This is Glutamine synthetase from Thermotoga maritima (strain ATCC 43589 / DSM 3109 / JCM 10099 / NBRC 100826 / MSB8).